Reading from the N-terminus, the 512-residue chain is Replication initiation protein (512 aa).

Its function is as follows. Essential for replication. Binds specifically to a 60-bp region corresponding to the putative origin of replication of pXO2. Also binds nonspecifically to single-stranded DNA with lower affinity. In Bacillus anthracis, this protein is Replication initiation protein (repS).